Here is a 545-residue protein sequence, read N- to C-terminus: Mediator of RNA polymerase II transcription subunit 17 (545 aa).

Positions 148–168 (TVPPSSLQFSRSQPPESKESD) are disordered. Polar residues predominate over residues 149-162 (VPPSSLQFSRSQPP).

Belongs to the Mediator complex subunit 17 family. In terms of assembly, component of the Mediator complex. Interacts with med18, prk1 and rbp1.

The protein localises to the nucleus. Component of the Mediator complex, a coactivator involved in the regulated transcription of nearly all RNA polymerase II-dependent genes. Mediator functions as a bridge to convey information from gene-specific regulatory proteins to the basal RNA polymerase II transcription machinery. Mediator is recruited to promoters by direct interactions with regulatory proteins and serves as a scaffold for the assembly of a functional preinitiation complex with RNA polymerase II and the general transcription factors. The polypeptide is Mediator of RNA polymerase II transcription subunit 17 (med17) (Schizosaccharomyces pombe (strain 972 / ATCC 24843) (Fission yeast)).